Consider the following 204-residue polypeptide: Paraneoplastic antigen-like protein 8C (204 aa).

Residues 135–204 (PPATGPRELP…RRHHASDKKL (70 aa)) are disordered. The segment covering 182–204 (VGKRGKRKNKKNRRRHHASDKKL) has biased composition (basic residues).

The protein belongs to the PNMA family.

This chain is Paraneoplastic antigen-like protein 8C, found in Homo sapiens (Human).